The chain runs to 383 residues: Dihydroorotase (383 aa).

Positions 47 and 49 each coordinate Zn(2+). Residues 49-51 (HFR) and Asn-81 contribute to the substrate site. Positions 128, 159, 198, and 264 each coordinate Zn(2+). Lys-128 is subject to N6-carboxylysine. Asp-264 is a catalytic residue. Residues His-268 and 280-281 (PG) contribute to the substrate site.

The protein belongs to the metallo-dependent hydrolases superfamily. DHOase family. Class I DHOase subfamily. Zn(2+) is required as a cofactor.

It carries out the reaction (S)-dihydroorotate + H2O = N-carbamoyl-L-aspartate + H(+). It participates in pyrimidine metabolism; UMP biosynthesis via de novo pathway; (S)-dihydroorotate from bicarbonate: step 3/3. Catalyzes the reversible cyclization of carbamoyl aspartate to dihydroorotate. In Pyrobaculum aerophilum (strain ATCC 51768 / DSM 7523 / JCM 9630 / CIP 104966 / NBRC 100827 / IM2), this protein is Dihydroorotase.